The following is a 204-amino-acid chain: Putative rubrerythrin (204 aa).

One can recognise a Ferritin-like diiron domain in the interval 1–159 (MINNFFVINM…KLLKEVEEGT (159 aa)). Fe(3+) is bound by residues Glu24, Glu57, Glu107, Glu110, Glu141, His144, Cys171, Cys174, Cys187, and Cys190. The Rubredoxin-like domain maps to 166-204 (PVEWVCRKCGFVHLGKEPPEKCPSCSHPRKYFEVKCEKY).

Homodimer. Possesses two rubredoxin-like centers and two non-sulfur oxo-bridged di-iron centers per dimer. The cofactor is Fe(3+).

It is found in the cytoplasm. In terms of biological role, may provide oxidative stress protection via catalytic reduction of intracellular hydrogen peroxide. This Methanocaldococcus jannaschii (strain ATCC 43067 / DSM 2661 / JAL-1 / JCM 10045 / NBRC 100440) (Methanococcus jannaschii) protein is Putative rubrerythrin.